Consider the following 416-residue polypeptide: Squamosa promoter-binding-like protein 8 (416 aa).

Residues 11-53 form a disordered region; sequence SSCDDFGYNATPPPPPSLLPIMDQDGGGGSIQRDHHHHHNHQQ. The SBP-type zinc-finger motif lies at 182-260; sequence PPRCQAEGCK…ADHNRRRRKS (79 aa). Residues C185, C190, C207, H210, C227, C230, H234, and C246 each coordinate Zn(2+). A Bipartite nuclear localization signal motif is present at residues 243-259; it reads KKSCRKRLADHNRRRRK. The disordered stretch occupies residues 250–299; it reads LADHNRRRRKSKPSDGEHSGEKRRAQANKSAATKDKAGSSSKNAGIGDGF. Residues 261–273 show a composition bias toward basic and acidic residues; the sequence is KPSDGEHSGEKRR.

As to expression, expressed in stems, leaf sheaths, and young panicles.

It is found in the nucleus. Functionally, probable transcription factor that plays an important role in building the laminar joint between leaf blade and leaf sheath boundary, thereby controlling ligule and auricle development. This is Squamosa promoter-binding-like protein 8 (SPL8) from Oryza sativa subsp. indica (Rice).